A 459-amino-acid chain; its full sequence is uncharacterized protein (459 aa).

The next 12 helical transmembrane spans lie at 25–45 (SYGFGDFGNGFMFDLGQIYLL), 52–72 (AGIPAAMAGGIFLVSKLFAAI), 95–115 (PYLLIGSIVLAVLTVLIFLSP), 123–143 (LIYAYASYMIWGIGYSFVNIP), 167–187 (IGSLGALFITSVAVMPLLVKF), 192–212 (VGYPVVMGLFAALGVFWFYIC), 249–269 (VLMTIFSISAYNIKSAMLVYF), 279–299 (LMAYMNFIIIGSSFLGVVFLP), 310–330 (TAMIGFGISVAADLINFMLPS), 332–352 (VYVFTILASIAFIGISIPNGI), 389–409 (SLSGFLSGIGLGIIGYVPNAV), and 420–440 (ALLLLYPAIALALAMFIIGFL).

It belongs to the sodium:galactoside symporter (TC 2.A.2) family.

It localises to the cell membrane. This is an uncharacterized protein from Bacillus subtilis (strain 168).